Reading from the N-terminus, the 311-residue chain is Putative S-adenosyl-L-methionine-dependent methyltransferase MUL_4761 (311 aa).

S-adenosyl-L-methionine contacts are provided by residues D132 and D161 to L162.

The protein belongs to the UPF0677 family.

In terms of biological role, exhibits S-adenosyl-L-methionine-dependent methyltransferase activity. This chain is Putative S-adenosyl-L-methionine-dependent methyltransferase MUL_4761, found in Mycobacterium ulcerans (strain Agy99).